A 48-amino-acid polypeptide reads, in one-letter code: MRKKVVLSCEECKNRNYSTMKDTSSVERLEIKKFCKTCNKHTVHKETK.

It belongs to the bacterial ribosomal protein bL33 family.

The polypeptide is Large ribosomal subunit protein bL33A (Bacillus mycoides (strain KBAB4) (Bacillus weihenstephanensis)).